We begin with the raw amino-acid sequence, 969 residues long: Exoribonuclease II, mitochondrial (969 aa).

The transit peptide at 1–41 (MVVRRKVHVLLIARSFHSYTPCFRVTTRGKRQRSKSKQQAK) directs the protein to the mitochondrion. Over residues 28 to 38 (RGKRQRSKSKQ) the composition is skewed to basic residues. The tract at residues 28–54 (RGKRQRSKSKQQAKVELDHTRELDNDQ) is disordered. A compositionally biased stretch (basic and acidic residues) spans 40–51 (AKVELDHTRELD). The region spanning 522-853 (RYDFGDLRVF…NHLQIHRHLQ (332 aa)) is the RNB domain.

Belongs to the RNR ribonuclease family. As to quaternary structure, MSU1 and SUV3 are the two components of the mitochondrial degradosome (mtEXO).

It localises to the mitochondrion matrix. It carries out the reaction Exonucleolytic cleavage in the 3'- to 5'-direction to yield nucleoside 5'-phosphates.. Functionally, essential for mitochondrial biogenesis. Required for intron-independent turnover and processing of mitochondrial RNA. Participates in 3' mtRNA processing where it hydrolyzes single-stranded RNA or partially double-stranded RNA with 3' single-stranded tails. The protein is Exoribonuclease II, mitochondrial (DSS1) of Saccharomyces cerevisiae (strain ATCC 204508 / S288c) (Baker's yeast).